The following is a 710-amino-acid chain: uncharacterized protein (710 aa).

A disordered region spans residues 1–20 (MKQRQARLIGTPSQTRRQQE). Positions 13 to 42 (SQTRRQQELAEKLEKVKEVLEDEKKRQFNE) form a coiled coil.

This sequence belongs to the IIV-6 268L family.

This is an uncharacterized protein from Invertebrate iridescent virus 6 (IIV-6).